The chain runs to 414 residues: Serine hydroxymethyltransferase (414 aa).

Residues Leu-117 and 121-123 (GHL) each bind (6S)-5,6,7,8-tetrahydrofolate. An N6-(pyridoxal phosphate)lysine modification is found at Lys-226. Residue 349–351 (SPF) participates in (6S)-5,6,7,8-tetrahydrofolate binding.

The protein belongs to the SHMT family. In terms of assembly, homodimer. Pyridoxal 5'-phosphate serves as cofactor.

It localises to the cytoplasm. The enzyme catalyses (6R)-5,10-methylene-5,6,7,8-tetrahydrofolate + glycine + H2O = (6S)-5,6,7,8-tetrahydrofolate + L-serine. It participates in one-carbon metabolism; tetrahydrofolate interconversion. Its pathway is amino-acid biosynthesis; glycine biosynthesis; glycine from L-serine: step 1/1. In terms of biological role, catalyzes the reversible interconversion of serine and glycine with tetrahydrofolate (THF) serving as the one-carbon carrier. Also exhibits THF-independent aldolase activity toward beta-hydroxyamino acids, producing glycine and aldehydes, via a retro-aldol mechanism. The sequence is that of Serine hydroxymethyltransferase from Methanospirillum hungatei JF-1 (strain ATCC 27890 / DSM 864 / NBRC 100397 / JF-1).